Consider the following 305-residue polypeptide: Mitogen-activated protein kinase kinase 10 (305 aa).

Serine 34 is modified (phosphoserine). Residues 48–302 form the Protein kinase domain; that stretch reads LEKLSVLGQG…VEELLRHSFV (255 aa). Residues 54–62 and lysine 77 contribute to the ATP site; that span reads LGQGSGGTV. The active-site Proton acceptor is the aspartate 165. At threonine 200 the chain carries Phosphothreonine.

This sequence belongs to the protein kinase superfamily. STE Ser/Thr protein kinase family. MAP kinase kinase subfamily. In terms of assembly, interacts with P.syringae type III effector HopF2.

It catalyses the reaction L-seryl-[protein] + ATP = O-phospho-L-seryl-[protein] + ADP + H(+). The enzyme catalyses L-threonyl-[protein] + ATP = O-phospho-L-threonyl-[protein] + ADP + H(+). The catalysed reaction is L-tyrosyl-[protein] + ATP = O-phospho-L-tyrosyl-[protein] + ADP + H(+). The sequence is that of Mitogen-activated protein kinase kinase 10 (MKK10) from Arabidopsis thaliana (Mouse-ear cress).